The chain runs to 202 residues: Holliday junction resolvase RecU (202 aa).

Mg(2+)-binding residues include T85, D87, E100, and Q119.

Belongs to the RecU family. Mg(2+) serves as cofactor.

The protein resides in the cytoplasm. It carries out the reaction Endonucleolytic cleavage at a junction such as a reciprocal single-stranded crossover between two homologous DNA duplexes (Holliday junction).. Endonuclease that resolves Holliday junction intermediates in genetic recombination. Cleaves mobile four-strand junctions by introducing symmetrical nicks in paired strands. Promotes annealing of linear ssDNA with homologous dsDNA. Required for DNA repair, homologous recombination and chromosome segregation. This chain is Holliday junction resolvase RecU, found in Streptococcus pyogenes serotype M5 (strain Manfredo).